A 343-amino-acid chain; its full sequence is Cytoplasmic tRNA 2-thiolation protein 1 (343 aa).

It belongs to the TtcA family. CTU1/NCS6/ATPBD3 subfamily.

The protein resides in the cytoplasm. Its pathway is tRNA modification; 5-methoxycarbonylmethyl-2-thiouridine-tRNA biosynthesis. Its function is as follows. Plays a central role in 2-thiolation of mcm(5)S(2)U at tRNA wobble positions of tRNA(Lys), tRNA(Glu) and tRNA(Gln). Directly binds tRNAs and probably acts by catalyzing adenylation of tRNAs, an intermediate required for 2-thiolation. It is unclear whether it acts as a sulfurtransferase that transfers sulfur from thiocarboxylated URM1 onto the uridine of tRNAs at wobble position. The polypeptide is Cytoplasmic tRNA 2-thiolation protein 1 (Drosophila mojavensis (Fruit fly)).